Consider the following 485-residue polypeptide: Membrane-bound lytic murein transglycosylase F (485 aa).

The N-terminal stretch at 1-29 is a signal peptide; it reads MFAHTALRQRCAKWLFATGLFLLLGACVE. The segment at 30 to 267 is non-LT domain; the sequence is KPSTLERVKE…RLKDRYYGHV (238 aa). Residues 268-485 form an LT domain region; that stretch reads DVLGYVGAYT…DKPAEQSPPM (218 aa). Glutamate 314 is an active-site residue. Residues 465–485 are disordered; that stretch reads EGNLHVPGVNKDKPAEQSPPM.

The protein in the N-terminal section; belongs to the bacterial solute-binding protein 3 family. This sequence in the C-terminal section; belongs to the transglycosylase Slt family.

It localises to the cell outer membrane. It carries out the reaction Exolytic cleavage of the (1-&gt;4)-beta-glycosidic linkage between N-acetylmuramic acid (MurNAc) and N-acetylglucosamine (GlcNAc) residues in peptidoglycan, from either the reducing or the non-reducing ends of the peptidoglycan chains, with concomitant formation of a 1,6-anhydrobond in the MurNAc residue.. In terms of biological role, murein-degrading enzyme that degrades murein glycan strands and insoluble, high-molecular weight murein sacculi, with the concomitant formation of a 1,6-anhydromuramoyl product. Lytic transglycosylases (LTs) play an integral role in the metabolism of the peptidoglycan (PG) sacculus. Their lytic action creates space within the PG sacculus to allow for its expansion as well as for the insertion of various structures such as secretion systems and flagella. This is Membrane-bound lytic murein transglycosylase F from Pseudomonas putida (strain W619).